Consider the following 315-residue polypeptide: Methionyl-tRNA formyltransferase (315 aa).

S113–P116 contacts (6S)-5,6,7,8-tetrahydrofolate.

Belongs to the Fmt family.

The enzyme catalyses L-methionyl-tRNA(fMet) + (6R)-10-formyltetrahydrofolate = N-formyl-L-methionyl-tRNA(fMet) + (6S)-5,6,7,8-tetrahydrofolate + H(+). In terms of biological role, attaches a formyl group to the free amino group of methionyl-tRNA(fMet). The formyl group appears to play a dual role in the initiator identity of N-formylmethionyl-tRNA by promoting its recognition by IF2 and preventing the misappropriation of this tRNA by the elongation apparatus. The protein is Methionyl-tRNA formyltransferase of Salmonella enteritidis PT4 (strain P125109).